A 466-amino-acid chain; its full sequence is Asparagine--tRNA ligase (466 aa).

Belongs to the class-II aminoacyl-tRNA synthetase family. Homodimer.

The protein localises to the cytoplasm. It catalyses the reaction tRNA(Asn) + L-asparagine + ATP = L-asparaginyl-tRNA(Asn) + AMP + diphosphate + H(+). This Pectobacterium atrosepticum (strain SCRI 1043 / ATCC BAA-672) (Erwinia carotovora subsp. atroseptica) protein is Asparagine--tRNA ligase.